The sequence spans 38 residues: Large ribosomal subunit protein bL36 (38 aa).

This sequence belongs to the bacterial ribosomal protein bL36 family.

The chain is Large ribosomal subunit protein bL36 from Polynucleobacter necessarius subsp. necessarius (strain STIR1).